Consider the following 601-residue polypeptide: MCGIVGYIGYDNAKELLLKGLEKLEYRGYDSAGIAVVNDDNTTVFKEKGRIAELRKVADSSDFDGPVGIGHTRWATHGVPNHENSHPHQSSNGRFTLVHNGVIENYEELKGEYLQGVSFISETDTEVIVQLVEYFSNQGLSTEEAFTKVVSLLHGSYALGLLDAEDKDTIYVAKNKSPLLLGVGEGFNVIASDALAMLQVTSEYKEIHDHEIVIVKKDEVIIKDADGNVVERDSYIAEIDASDAEKGVYAHYMLKEIHEQPAVMRRIIQEYQDAEGNLKIDQDIINDVKEADRIYVIAAGTSYHAGLVGKEFLEKWAGVPTEVHVASEFVYNMPLLSEKPLFVYISQSGETADSRAVLVETNKLGHKSLTITNVAGSTLSREADHTLLLHAGPEIAVASTKAYTAQIAVLSILSQIVAKEHGREADIDLLRELAKVTTAIEAIVDDAPIMEQIATDFLETTRNAFFIGRTIDYNVSLEGALKLKEISYIQAEGFAGGELKHGTIALIEEGTPVVGLATQEKVNLSIRGNVKEVVARGAHPCIISMEGLEKEGDTYVIPHVHELLTPLVSVVALQLISYYAALHRDLDVDKPRNLAKSVTVE.

Cysteine 2 acts as the Nucleophile; for GATase activity in catalysis. In terms of domain architecture, Glutamine amidotransferase type-2 spans 2-218 (CGIVGYIGYD…DHEIVIVKKD (217 aa)). 2 consecutive SIS domains span residues 284–423 (IIND…EHGR) and 453–591 (IATD…VDKP). Catalysis depends on lysine 596, which acts as the For Fru-6P isomerization activity.

As to quaternary structure, homodimer.

The protein localises to the cytoplasm. It catalyses the reaction D-fructose 6-phosphate + L-glutamine = D-glucosamine 6-phosphate + L-glutamate. Functionally, catalyzes the first step in hexosamine metabolism, converting fructose-6P into glucosamine-6P using glutamine as a nitrogen source. This chain is Glutamine--fructose-6-phosphate aminotransferase [isomerizing], found in Staphylococcus aureus (strain COL).